Here is a 171-residue protein sequence, read N- to C-terminus: Flavodoxin (171 aa).

The Flavodoxin-like domain maps to 4–166 (IGLFVGTTTG…RIKEWVKQLK (163 aa)).

Belongs to the flavodoxin family. FMN serves as cofactor.

Functionally, low-potential electron donor to a number of redox enzymes. The sequence is that of Flavodoxin (fld) from Trichodesmium erythraeum (strain IMS101).